The sequence spans 113 residues: U-scoloptoxin(16)-Sa1a (113 aa).

An N-terminal signal peptide occupies residues 1–29; the sequence is MAPPSNPLFVVLCWALFAYLMLVLRDIQA.

It belongs to the scoloptoxin-16 family. In terms of processing, contains 4 disulfide bonds. Expressed by the venom gland.

The protein resides in the secreted. In Scolopendra alternans (Florida Keys giant centipede), this protein is U-scoloptoxin(16)-Sa1a.